Consider the following 264-residue polypeptide: S-adenosylmethionine decarboxylase proenzyme (264 aa).

The active-site Schiff-base intermediate with substrate; via pyruvic acid is the serine 112. Serine 112 carries the pyruvic acid (Ser); by autocatalysis modification. Histidine 117 (proton acceptor; for processing activity) is an active-site residue. The active-site Proton donor; for catalytic activity is the cysteine 140.

The protein belongs to the prokaryotic AdoMetDC family. Type 2 subfamily. Heterooctamer of four alpha and four beta chains arranged as a tetramer of alpha/beta heterodimers. Pyruvate is required as a cofactor. Post-translationally, is synthesized initially as an inactive proenzyme. Formation of the active enzyme involves a self-maturation process in which the active site pyruvoyl group is generated from an internal serine residue via an autocatalytic post-translational modification. Two non-identical subunits are generated from the proenzyme in this reaction, and the pyruvate is formed at the N-terminus of the alpha chain, which is derived from the carboxyl end of the proenzyme. The post-translation cleavage follows an unusual pathway, termed non-hydrolytic serinolysis, in which the side chain hydroxyl group of the serine supplies its oxygen atom to form the C-terminus of the beta chain, while the remainder of the serine residue undergoes an oxidative deamination to produce ammonia and the pyruvoyl group blocking the N-terminus of the alpha chain.

The enzyme catalyses S-adenosyl-L-methionine + H(+) = S-adenosyl 3-(methylsulfanyl)propylamine + CO2. The protein operates within amine and polyamine biosynthesis; S-adenosylmethioninamine biosynthesis; S-adenosylmethioninamine from S-adenosyl-L-methionine: step 1/1. In terms of biological role, catalyzes the decarboxylation of S-adenosylmethionine to S-adenosylmethioninamine (dcAdoMet), the propylamine donor required for the synthesis of the polyamines spermine and spermidine from the diamine putrescine. The chain is S-adenosylmethionine decarboxylase proenzyme from Cronobacter sakazakii (strain ATCC BAA-894) (Enterobacter sakazakii).